Reading from the N-terminus, the 183-residue chain is Calcineurin subunit B type 2 (183 aa).

G2 carries N-myristoyl glycine lipidation. 4 EF-hand domains span residues 25 to 60 (REIKRLYKRFKRLDKEEKGSINVEDFNQIPELSMNP), 64 to 92 (RIISIFDVNRDGQVNFKQFVKSLSTFHPK), 94 to 129 (DKADKIKILFKVYDINNDGFITRDEIETILTMMVGS), and 135 to 170 (QISSIVEETLNEADVNGKGKLDYPDFYNSIGSSGCN). Residues D107, N109, D111, and E118 each contribute to the Ca(2+) site.

It belongs to the calcineurin regulatory subunit family. As to quaternary structure, calcineurin is composed of a catalytic subunit (A) and a regulatory subunit (B).

Functionally, regulatory subunit of calcineurin, a calcium-dependent, calmodulin stimulated protein phosphatase. Confers calcium sensitivity. The polypeptide is Calcineurin subunit B type 2 (cnbB) (Dictyostelium discoideum (Social amoeba)).